Consider the following 301-residue polypeptide: Putative two-component membrane permease complex subunit SMU_747c (301 aa).

8 helical membrane-spanning segments follow: residues 15–35 (LAIF…GAIL), 60–80 (ILFG…IVPI), 97–117 (FLAT…SAFG), 124–144 (FLRL…LGFI), 188–208 (YLIF…TRIL), 211–231 (IGHN…ILSL), 238–258 (FIGT…FLLI), and 278–298 (FILQ…LIVG).

It belongs to the UPF0718 family. In terms of assembly, interacts with SMU_746c.

The protein localises to the cell membrane. Its function is as follows. Could be part of a two-component membrane permease system responsible for amino acid transport under low pH. Involved in acidogenesis, biofilm formation and low-pH survival. The protein is Putative two-component membrane permease complex subunit SMU_747c of Streptococcus mutans serotype c (strain ATCC 700610 / UA159).